A 233-amino-acid polypeptide reads, in one-letter code: Adenosylcobinamide-GDP ribazoletransferase (233 aa).

The next 7 membrane-spanning stretches (helical) occupy residues 24-44 (LWAFPLVALVSSALPTLVLYL), 46-66 (LPLSNVLAVLALYFTIGLLHL), 96-116 (IAGLFAVVMVLFLQVYSLQLV), 117-137 (PFYAIFLAELNSKLAMLLALA), 156-176 (SGQLLGGFIFYAILLVPVVVY), 184-204 (LLGLAFGGYAIKVALDNFGGI), and 209-229 (IGAIAEITRAGTLLVVAFAGA).

This sequence belongs to the CobS family. It depends on Mg(2+) as a cofactor.

Its subcellular location is the cell membrane. It catalyses the reaction alpha-ribazole + adenosylcob(III)inamide-GDP = adenosylcob(III)alamin + GMP + H(+). The enzyme catalyses alpha-ribazole 5'-phosphate + adenosylcob(III)inamide-GDP = adenosylcob(III)alamin 5'-phosphate + GMP + H(+). It participates in cofactor biosynthesis; adenosylcobalamin biosynthesis; adenosylcobalamin from cob(II)yrinate a,c-diamide: step 7/7. Its function is as follows. Joins adenosylcobinamide-GDP and alpha-ribazole to generate adenosylcobalamin (Ado-cobalamin). Also synthesizes adenosylcobalamin 5'-phosphate from adenosylcobinamide-GDP and alpha-ribazole 5'-phosphate. The protein is Adenosylcobinamide-GDP ribazoletransferase of Thermococcus onnurineus (strain NA1).